Here is a 312-residue protein sequence, read N- to C-terminus: Putative pyridoxal kinase BUD16 (312 aa).

Substrate contacts are provided by S9, T44, and Y122. Residues 183 to 184 (TS) and 211 to 223 (RVPF…TGVG) each bind ATP. D224 contributes to the substrate binding site.

It belongs to the pyridoxine kinase family. A divalent metal cation is required as a cofactor.

It localises to the cytoplasm. The protein resides in the nucleus. It catalyses the reaction pyridoxal + ATP = pyridoxal 5'-phosphate + ADP + H(+). Required for synthesis of pyridoxal-5-phosphate from vitamin B6. Important for bud site selection. The protein is Putative pyridoxal kinase BUD16 (BUD16) of Saccharomyces cerevisiae (strain ATCC 204508 / S288c) (Baker's yeast).